We begin with the raw amino-acid sequence, 89 residues long: Small ribosomal subunit protein bS20 (89 aa).

The protein belongs to the bacterial ribosomal protein bS20 family.

In terms of biological role, binds directly to 16S ribosomal RNA. In Helicobacter pylori (strain Shi470), this protein is Small ribosomal subunit protein bS20.